Here is a 342-residue protein sequence, read N- to C-terminus: Isopentenyl-diphosphate delta-isomerase (342 aa).

11-12 (RK) is a binding site for substrate. Residues Ser-68, 69 to 71 (SMT), Ser-99, and Asn-128 each bind FMN. 99 to 101 (SQR) contacts substrate. Residue Gln-162 participates in substrate binding. Glu-163 provides a ligand contact to Mg(2+). FMN contacts are provided by residues Lys-194, Ser-219, Thr-224, 275–277 (GVR), and 296–297 (AK).

The protein belongs to the IPP isomerase type 2 family. In terms of assembly, homooctamer. Dimer of tetramers. FMN is required as a cofactor. Requires NADPH as cofactor. It depends on Mg(2+) as a cofactor.

Its subcellular location is the cytoplasm. The catalysed reaction is isopentenyl diphosphate = dimethylallyl diphosphate. Its function is as follows. Involved in the biosynthesis of isoprenoids. Catalyzes the 1,3-allylic rearrangement of the homoallylic substrate isopentenyl (IPP) to its allylic isomer, dimethylallyl diphosphate (DMAPP). This is Isopentenyl-diphosphate delta-isomerase from Legionella pneumophila (strain Lens).